Here is an 88-residue protein sequence, read N- to C-terminus: UPF0298 protein BcerKBAB4_3759 (88 aa).

This sequence belongs to the UPF0298 family.

It localises to the cytoplasm. This chain is UPF0298 protein BcerKBAB4_3759, found in Bacillus mycoides (strain KBAB4) (Bacillus weihenstephanensis).